The primary structure comprises 658 residues: Biosynthetic arginine decarboxylase (658 aa).

At Lys-127 the chain carries N6-(pyridoxal phosphate)lysine. 307–317 (FDVGGGLGVDY) is a substrate binding site.

It belongs to the Orn/Lys/Arg decarboxylase class-II family. SpeA subfamily. In terms of assembly, homotetramer. Mg(2+) is required as a cofactor. The cofactor is pyridoxal 5'-phosphate.

It is found in the periplasm. The catalysed reaction is L-arginine + H(+) = agmatine + CO2. Its pathway is amine and polyamine biosynthesis; agmatine biosynthesis; agmatine from L-arginine: step 1/1. In terms of biological role, catalyzes the biosynthesis of agmatine from arginine. The chain is Biosynthetic arginine decarboxylase (speA) from Escherichia coli O157:H7.